Reading from the N-terminus, the 64-residue chain is Large ribosomal subunit protein bL32 (64 aa).

It belongs to the bacterial ribosomal protein bL32 family.

This Flavobacterium psychrophilum (strain ATCC 49511 / DSM 21280 / CIP 103535 / JIP02/86) protein is Large ribosomal subunit protein bL32.